Consider the following 37-residue polypeptide: Mu-thomitoxin-Hme1a (37 aa).

Intrachain disulfides connect C2–C18, C9–C22, and C17–C33. Residue F37 is modified to Phenylalanine amide.

It belongs to the neurotoxin 01 (U2-agtx) family. In terms of processing, contains 3 disulfide bonds. In terms of tissue distribution, expressed by the venom gland.

It localises to the secreted. Functionally, blocks the Nav1.2/SCN2A, Nav1.4/SCN4A, and Nav1.6/SCN8A sodium channels. Reduces the peak amplitude of the sodium current and negatively shifts the steady-state inactivation process. Does not shift the threshold potential of activation or the voltage corresponding to maximal current. Does not change the reversal potential of the sodium current. May act on site 1 of the receptor. The chain is Mu-thomitoxin-Hme1a from Heriaeus mellotteei (Crab spider).